We begin with the raw amino-acid sequence, 1377 residues long: Pleckstrin homology-like domain family B member 1 (1377 aa).

Residue Ser-51 is modified to Phosphoserine. The FHA domain occupies 64 to 125 (TVIGSAARDI…LTQGCMLCLG (62 aa)). Arg-131 carries the asymmetric dimethylarginine modification. The segment at 150 to 187 (RAPGPPYSPVPAESESLVNGNHTPQTATRGPSACASHS) is disordered. The span at 165-178 (SLVNGNHTPQTATR) shows a compositional bias: polar residues. Ser-192, Ser-220, and Ser-223 each carry phosphoserine. Disordered stretches follow at residues 211 to 334 (AAGK…LTDS) and 370 to 535 (GALS…GSFS). Residues 252 to 273 (SPAFSPLSSPASSGSCASHSPS) are compositionally biased toward low complexity. Over residues 288–303 (RSSSYHLALQPPQSRP) the composition is skewed to polar residues. Positions 309–322 (ESPRLSRKGGHERP) are enriched in basic and acidic residues. 10 positions are modified to phosphoserine: Ser-324, Ser-334, Ser-381, Ser-404, Ser-430, Ser-443, Ser-461, Ser-470, Ser-489, and Ser-501. The segment covering 456–473 (ELPPLSPSLSRRALSPLP) has biased composition (low complexity). Residues 481–491 (KLNREVAESPR) show a composition bias toward basic and acidic residues. An Omega-N-methylarginine modification is found at Arg-512. Phosphoserine is present on residues Ser-518 and Ser-520. Thr-522 is subject to Phosphothreonine. Residues Ser-533, Ser-539, Ser-551, Ser-555, Ser-563, Ser-578, and Ser-583 each carry the phosphoserine modification. The segment covering 653–663 (PSRGLAGASGR) has biased composition (low complexity). Disordered stretches follow at residues 653 to 707 (PSRG…APST), 936 to 1019 (TGPA…GSLP), and 1119 to 1138 (SMET…DNMS). The segment covering 677-691 (ESMERSDEENLKEEC) has biased composition (basic and acidic residues). A Phosphoserine modification is found at Ser-678. The stretch at 683–809 (DEENLKEECS…TETKLFEDLE (127 aa)) forms a coiled coil. Phosphoserine occurs at positions 971 and 1017. Residues 971–992 (SPLPRTRSGPLPSSSGSSSSSS) show a composition bias toward low complexity. Polar residues predominate over residues 1009-1018 (LLTQNGTGSL). Residues 1144-1208 (DMGKIEEMEK…ARRQQLVEKE (65 aa)) adopt a coiled-coil conformation. The PH domain occupies 1256 to 1370 (SKVCRGYLVK…WMDVIVTGAE (115 aa)).

The protein is Pleckstrin homology-like domain family B member 1 (PHLDB1) of Homo sapiens (Human).